The chain runs to 322 residues: MELSRRNRSLLSVVLNLLALSFSVAAFFTSYWCEGTHKVVKPPCLSAVKSKNCQALALNSSSTGSDATDTNGTLNPNVVHYNWETGDDKYAFKYFHTGFWFSCEKHQGEEACRSFIELSPDSEKGVLWLSVISEFLYIILLSLGFLLMCLEFFSSSNFIDGLKINAFAAIITVLSGLLGMVAHMMYMTVFQVTVNLGPKDWRPQTWYYGWSFGLAWLSFTLCMSASVLTLNTYTKTILEFKYRRRIFEKNVRECNPFLDPEMVRFLWEKYIFSVSSTVEDPFNWHKGFGSPIFVDIGSITDLPGAVKEEERGMDLEDDGDQC.

The Cytoplasmic segment spans residues 1–8 (MELSRRNR). Residues 9–29 (SLLSVVLNLLALSFSVAAFFT) form a helical membrane-spanning segment. Residues 30-125 (SYWCEGTHKV…IELSPDSEKG (96 aa)) are Extracellular-facing. A helical membrane pass occupies residues 126-146 (VLWLSVISEFLYIILLSLGFL). Residues 147-166 (LMCLEFFSSSNFIDGLKINA) lie on the Cytoplasmic side of the membrane. A helical membrane pass occupies residues 167-187 (FAAIITVLSGLLGMVAHMMYM). The Extracellular segment spans residues 188–209 (TVFQVTVNLGPKDWRPQTWYYG). A helical membrane pass occupies residues 210–230 (WSFGLAWLSFTLCMSASVLTL). Residues 231–322 (NTYTKTILEF…MDLEDDGDQC (92 aa)) are Cytoplasmic-facing.

This sequence belongs to the GSG1 family. As to quaternary structure, component of the AMPAR complex.

It is found in the cell membrane. It localises to the synapse. Its function is as follows. As a component of the AMPAR complex, modifies AMPA receptor (AMPAR) gating. The chain is Germ cell-specific gene 1-like protein (gsg1l) from Xenopus tropicalis (Western clawed frog).